The chain runs to 273 residues: Ribonuclease PH (273 aa).

Phosphate contacts are provided by residues R86 and 124-126 (GTR). The tract at residues 254–273 (GHQEPGEGAGVSLAPGGGGL) is disordered.

Belongs to the RNase PH family. In terms of assembly, homohexameric ring arranged as a trimer of dimers.

It carries out the reaction tRNA(n+1) + phosphate = tRNA(n) + a ribonucleoside 5'-diphosphate. Its function is as follows. Phosphorolytic 3'-5' exoribonuclease that plays an important role in tRNA 3'-end maturation. Removes nucleotide residues following the 3'-CCA terminus of tRNAs; can also add nucleotides to the ends of RNA molecules by using nucleoside diphosphates as substrates, but this may not be physiologically important. Probably plays a role in initiation of 16S rRNA degradation (leading to ribosome degradation) during starvation. In Symbiobacterium thermophilum (strain DSM 24528 / JCM 14929 / IAM 14863 / T), this protein is Ribonuclease PH.